Here is a 927-residue protein sequence, read N- to C-terminus: Protein unc-45 homolog B (927 aa).

3 TPR repeats span residues 4-37, 41-74, and 76-108; these read PVQLKEEGNKYFQSNEYGQAIQCYSKALKLITDK, AVLYRNRSACYLKQDNYVQAAADASKAIDVDASD, and KALFRRCQALEKLGKLDQAYKDVQRCATLEPKN. ARM repeat units follow at residues 167-206, 209-248, and 746-785; these read DAGAEQIFQNNGVNLLMQLIESKDPEMILSAIRTLSGMCT, RARATAIVHLVGINKICSIMAVDNEEIALAACNLLQNIVD, and DKLRQKIIKEKALPEIENYMFENHEQIRQAATECMCNLAL.

Detected initially throughout the somites and the heart and gradually also expressed in the jaw, branchial arches and body wall muscles at later embryonic stages.

It localises to the cytoplasm. The protein resides in the myofibril. It is found in the sarcomere. The protein localises to the z line. Its subcellular location is the a band. It localises to the perinuclear region. The protein resides in the cytosol. Functionally, acts as a co-chaperone for HSP90 and is required for proper folding of the myosin motor domain. Plays a role in sarcomere formation during muscle cell development. Is necessary for normal early lens development. This Xenopus tropicalis (Western clawed frog) protein is Protein unc-45 homolog B.